Reading from the N-terminus, the 221-residue chain is GFP-like non-fluorescent chromoprotein (221 aa).

Positions 62–64 form a cross-link, 2-iminomethyl-5-imidazolinone (Gln-Gly); the sequence is QYG. Tyr-63 carries the 2,3-didehydrotyrosine modification.

It belongs to the GFP family. As to quaternary structure, homotetramer. Post-translationally, contains a chromophore consisting of modified amino acid residues. The chromophore is formed by autocatalytic backbone condensation between Xaa-N and Gly-(N+2), oxidation of Tyr-(N+1) to didehydrotyrosine, and formation of a double bond to the alpha-amino nitrogen of residue Xaa-N. Maturation of the chromophore requires nothing other than molecular oxygen. The precise stereochemistry of the tyrosine has not been determined.

Its function is as follows. Non-fluorescent pigment protein that is lilac in color. This Goniopora tenuidens (Anemone coral) protein is GFP-like non-fluorescent chromoprotein.